Here is a 73-residue protein sequence, read N- to C-terminus: MMFPIRCFSCGNVIAEVFEEYKERILKGENPKDVLDDLGIKKYCCRRMFISYRIGEDGREIIDEIIAHDERYL.

Positions 7, 10, 44, and 45 each coordinate Zn(2+).

Belongs to the archaeal Rpo10/eukaryotic RPB10 RNA polymerase subunit family. Part of the RNA polymerase complex. Forms an Rpo3-Rpo10-Rpo11-Rpo12 complex upon coexpression. Requires Zn(2+) as cofactor.

Its subcellular location is the cytoplasm. The enzyme catalyses RNA(n) + a ribonucleoside 5'-triphosphate = RNA(n+1) + diphosphate. Functionally, DNA-dependent RNA polymerase (RNAP) catalyzes the transcription of DNA into RNA using the four ribonucleoside triphosphates as substrates. The chain is DNA-directed RNA polymerase subunit Rpo10 from Methanocaldococcus jannaschii (strain ATCC 43067 / DSM 2661 / JAL-1 / JCM 10045 / NBRC 100440) (Methanococcus jannaschii).